The sequence spans 551 residues: Cilia- and flagella-associated protein 45 (551 aa).

Disordered regions lie at residues 1–52 (MPLR…KSDS), 232–256 (MEIDRRESLQRQEDRERKRREERVR), and 385–415 (EQDALRAKRNQEVADREWRRKEKENAQKKIE). Over residues 8–18 (ASSSASTASNR) the composition is skewed to low complexity. Residues 276–524 (AEHREQEKEQ…EDIKKQKLEE (249 aa)) are a coiled coil. The span at 387–415 (DALRAKRNQEVADREWRRKEKENAQKKIE) shows a compositional bias: basic and acidic residues.

Belongs to the CFAP45 family. As to quaternary structure, microtubule inner protein component of sperm flagellar doublet microtubules. Interacts with AK8; dimerization with AK8 may create a cavity at the interface of the dimer that can accommodate AMP. Interacts with CFAP52. Interacts with ENKUR. Directly interacts with DNALI1. Interacts with DNAH11. Interacts with DNAI1. Expressed in respiratory cells and in sperm (at protein level).

It is found in the cytoplasm. Its subcellular location is the cytoskeleton. It localises to the cilium axoneme. The protein localises to the flagellum axoneme. The protein resides in the cell projection. It is found in the cilium. Its subcellular location is the flagellum. Its function is as follows. Microtubule inner protein (MIP) part of the dynein-decorated doublet microtubules (DMTs) in cilia axoneme, which is required for motile cilia beating. It is an AMP-binding protein that may facilitate dynein ATPase-dependent ciliary and flagellar beating via adenine nucleotide homeostasis. May function as a donor of AMP to AK8 and hence promote ADP production. The protein is Cilia- and flagella-associated protein 45 (Cfap45) of Mus musculus (Mouse).